We begin with the raw amino-acid sequence, 418 residues long: Glutamyl-tRNA reductase (418 aa).

Residues Thr49–Arg52, Ser109, Glu114–Gln116, and Gln120 each bind substrate. Cys50 serves as the catalytic Nucleophile. Gly189–Ile194 contributes to the NADP(+) binding site.

Belongs to the glutamyl-tRNA reductase family. In terms of assembly, homodimer.

The enzyme catalyses (S)-4-amino-5-oxopentanoate + tRNA(Glu) + NADP(+) = L-glutamyl-tRNA(Glu) + NADPH + H(+). It participates in porphyrin-containing compound metabolism; protoporphyrin-IX biosynthesis; 5-aminolevulinate from L-glutamyl-tRNA(Glu): step 1/2. In terms of biological role, catalyzes the NADPH-dependent reduction of glutamyl-tRNA(Glu) to glutamate 1-semialdehyde (GSA). In Escherichia coli O139:H28 (strain E24377A / ETEC), this protein is Glutamyl-tRNA reductase.